The sequence spans 242 residues: Anti-Pycsar protein Apyc1 (242 aa).

A beta-lactamase-like region spans residues 17-216 (FNNNALIEQD…EMQSIIKLMH (200 aa)). 7 residues coordinate Zn(2+): His59, His61, Asp63, His64, His142, Asp162, and His216.

It belongs to the anti-Pycsar protein Apyc1 family. In terms of assembly, homodimer. It depends on Zn(2+) as a cofactor.

The enzyme catalyses 3',5'-cyclic CMP + H2O = CMP + H(+). It catalyses the reaction 3',5'-cyclic UMP + H2O = UMP + H(+). Its function is as follows. Counteracts the endogenous Pycsar antiviral defense system. Phosphodiesterase that enables metal-dependent hydrolysis of host cyclic nucleotide Pycsar defense signals such as cCMP and cUMP. The polypeptide is Anti-Pycsar protein Apyc1 (Saccharibacillus brassicae).